A 779-amino-acid chain; its full sequence is Potassium/sodium hyperpolarization-activated cyclic nucleotide-gated channel 3 (779 aa).

The tract at residues 1 to 47 (MEEEARPAAGAGEAATPARETPPAAPAQARAASGGVPESAPEPKRRQ) is disordered. At 1 to 96 (MEEEARPAAG…PYSDFRFYWD (96 aa)) the chain is on the cytoplasmic side. Over residues 7 to 32 (PAAGAGEAATPARETPPAAPAQARAA) the composition is skewed to low complexity. Positions 45–90 (RRQLGTLLQPTVNKFSLRVFGSHKAVEIEQERVKSAGAWIIHPYSD) are involved in subunit assembly. The helical transmembrane segment at 97–117 (LIMLLLMVGNLIVLPVGITFF) threads the bilayer. Residues 118-123 (KEENSP) are Extracellular-facing. A helical membrane pass occupies residues 124–144 (PWIVFNVLSDTFFLLDLVLNF). The Cytoplasmic portion of the chain corresponds to 145-170 (RTGIVVEEGAEILLAPRAIRTRYLRT). Residues 171-191 (WFLVDLISSIPVDYIFLVVEL) traverse the membrane as a helical segment. At 192 to 200 (EPRLDAEVY) the chain is on the extracellular side. A helical; Voltage-sensor transmembrane segment spans residues 201–221 (KTARALRIVRFTKILSLLRLL). The Cytoplasmic portion of the chain corresponds to 222–252 (RLSRLIRYIHQWEEIFHMTYDLASAVVRIFN). The chain crosses the membrane as a helical span at residues 253 to 273 (LIGMMLLLCHWDGCLQFLVPM). Residues 274 to 296 (LQDFPSDCWVSMNRMVNHSWGRQ) are Extracellular-facing. The N-linked (GlcNAc...) asparagine glycan is linked to asparagine 290. Positions 297-318 (YSHALFKAMSHMLCIGYGQQAP) form an intramembrane region, pore-forming. Residues 319-328 (VGMPDVWLTM) are Extracellular-facing. Residues 329-349 (LSMIVGATCYAMFIGHATALI) form a helical membrane-spanning segment. The Cytoplasmic segment spans residues 350 to 779 (QSLDSSRRQY…PRGPQISANM (430 aa)). Residues 353–779 (DSSRRQYQEK…PRGPQISANM (427 aa)) form an interaction with KCTD3 region. Residues glycine 491, glutamate 492, cysteine 494, arginine 501, threonine 502, arginine 542, and arginine 545 each contribute to the 3',5'-cyclic AMP site. The segment at 549 to 569 (KNSILQRKRSEPSPGSSGGVM) is disordered. Residue serine 633 is modified to Phosphoserine. Residues 687 to 697 (SLSRTGRSQVS) show a composition bias toward polar residues. The interval 687 to 779 (SLSRTGRSQV…PRGPQISANM (93 aa)) is disordered.

Belongs to the potassium channel HCN family. As to quaternary structure, homotetramer. The potassium channel is composed of a homo- or heterotetrameric complex of pore-forming subunits. Interacts with HCN1. Interacts with KCTD3; this interaction increases cell surface expression and current density of this channel. Interacts with PEX5L. In terms of tissue distribution, detected in hypothalamus, amygdala, olfactory bulb, hippocampus and retina (at protein level). Highly expressed in brain and heart, in particular in ventricle, atrium and in sinoatrial node (SAN). Detected at low levels in skeletal muscle and lung. Expressed in DRG neurons.

It localises to the cell membrane. The enzyme catalyses K(+)(in) = K(+)(out). It carries out the reaction Na(+)(in) = Na(+)(out). Its activity is regulated as follows. Unlike HCN2 and HCN4, HCN3 is insensitive to cyclic nucleotides, such as cAMP or cGMP. This lack of sensitivity of HCN3, despite harboring a functional cyclic nucleotide-binding domain (CNBD), may be explained by its shorter C-terminal sequence, which may alter the normal autoinhibition of the channel. Inhibited by Cs(1+) and ivabradine. Phosphatidylinositol-4,5-bisphosphate (PIP(2)) shifts HCN3 activation to more depolarized potentials and accelerated activation kinetics. Hyperpolarization-activated ion channel that are permeable to sodium and potassium ions, with an about 3:1 preference for potassium ions. Contributes to the native pacemaker currents in heart (If) and in neurons (Ih). In particular, plays a pivotal role in maintaining excitability and promoting rhythmic burst firing within hypothalamic nuclei. Exerts a significant influence on the configuration of the cardiac action potential waveform. Does not appear to play a prominent role in the processing of acute, neuropathic, or inflammatory pain. The chain is Potassium/sodium hyperpolarization-activated cyclic nucleotide-gated channel 3 (Hcn3) from Mus musculus (Mouse).